A 338-amino-acid chain; its full sequence is Ketol-acid reductoisomerase (NADP(+)) (338 aa).

A KARI N-terminal Rossmann domain is found at 1–181; sequence MKVYYDKDAD…GGGKAGIIET (181 aa). Residues 24 to 27, R47, and S52 contribute to the NADP(+) site; that span reads YGSQ. H107 is a catalytic residue. NADP(+) is bound at residue G133. The 146-residue stretch at 182-327 folds into the KARI C-terminal knotted domain; sequence NFREETETDL…EKLRAMMPWI (146 aa). The Mg(2+) site is built by D190, E194, E226, and E230. S251 serves as a coordination point for substrate.

This sequence belongs to the ketol-acid reductoisomerase family. Mg(2+) is required as a cofactor.

It catalyses the reaction (2R)-2,3-dihydroxy-3-methylbutanoate + NADP(+) = (2S)-2-acetolactate + NADPH + H(+). The enzyme catalyses (2R,3R)-2,3-dihydroxy-3-methylpentanoate + NADP(+) = (S)-2-ethyl-2-hydroxy-3-oxobutanoate + NADPH + H(+). Its pathway is amino-acid biosynthesis; L-isoleucine biosynthesis; L-isoleucine from 2-oxobutanoate: step 2/4. It participates in amino-acid biosynthesis; L-valine biosynthesis; L-valine from pyruvate: step 2/4. Functionally, involved in the biosynthesis of branched-chain amino acids (BCAA). Catalyzes an alkyl-migration followed by a ketol-acid reduction of (S)-2-acetolactate (S2AL) to yield (R)-2,3-dihydroxy-isovalerate. In the isomerase reaction, S2AL is rearranged via a Mg-dependent methyl migration to produce 3-hydroxy-3-methyl-2-ketobutyrate (HMKB). In the reductase reaction, this 2-ketoacid undergoes a metal-dependent reduction by NADPH to yield (R)-2,3-dihydroxy-isovalerate. The chain is Ketol-acid reductoisomerase (NADP(+)) from Methylibium petroleiphilum (strain ATCC BAA-1232 / LMG 22953 / PM1).